The sequence spans 25 residues: Toxin LyeTx 1 (25 aa).

Residue Leu-25 is modified to Leucine amide.

In terms of tissue distribution, expressed by the venom gland.

It is found in the secreted. Has antimicrobial activity against Gram-positive bacterium S.aureus (MIC=3.79 uM), Gram-negative bacterium E.coli (MIC=7.81 uM) and yeasts C.krusei (MIC=26.3 uM) and C.neoformans (MIC=13.2 uM). Has hemolytic activity against rabbit erythrocytes. Forms pores in lipid bilayers in vitro; pore formation is reduced when cholesterol is present in the bilayers. This Lycosa erythrognatha (Wolf spider) protein is Toxin LyeTx 1.